The chain runs to 210 residues: Ribulose-phosphate 3-epimerase (210 aa).

Residue Ser-9 coordinates substrate. A divalent metal cation is bound by residues His-34, Asp-36, and His-68. Asp-36 (proton acceptor) is an active-site residue. Residues His-68, 144-147, 177-179, and 199-200 each bind substrate; these read GFGG, DGG, and GS. Residue Asp-177 participates in a divalent metal cation binding. The Proton donor role is filled by Asp-177.

Belongs to the ribulose-phosphate 3-epimerase family. A divalent metal cation serves as cofactor.

The enzyme catalyses D-ribulose 5-phosphate = D-xylulose 5-phosphate. The protein operates within carbohydrate degradation. Its function is as follows. Catalyzes the reversible epimerization of D-ribulose 5-phosphate to D-xylulose 5-phosphate. This Serratia marcescens protein is Ribulose-phosphate 3-epimerase.